A 927-amino-acid polypeptide reads, in one-letter code: Phospholipase D beta 2 (927 aa).

A C2 domain is found at 104 to 237 (PFGKASLKVL…YSGARIEGTY (134 aa)). Asp-299 lines the Ca(2+) pocket. A PLD phosphodiesterase 1 domain is found at 439 to 474 (TIYTHHQKNLIVDADAGGNRRKIVAFVGGLDLCDGR). Active-site residues include His-444, Lys-446, and Asp-451. An a 1,2-diacyl-sn-glycero-3-phosphate-binding site is contributed by His-444. Ca(2+) contacts are provided by His-480 and His-512. The a 1,2-diacyl-sn-glycero-3-phosphate site is built by Gln-640 and His-778. Residues 773 to 800 (FMIYVHSKGMVVDDEYVVIGSANINQRS) enclose the PLD phosphodiesterase 2 domain. Active-site residues include His-778, Lys-780, and Asp-785. A Ca(2+)-binding site is contributed by Glu-841.

The protein belongs to the phospholipase D family. C2-PLD subfamily. It depends on Ca(2+) as a cofactor. In terms of tissue distribution, expressed in stems, and to a lower amount in leaves, flowers and siliques.

It is found in the cytoplasm. The protein localises to the membrane. It catalyses the reaction a 1,2-diacyl-sn-glycero-3-phosphocholine + H2O = a 1,2-diacyl-sn-glycero-3-phosphate + choline + H(+). With respect to regulation, inhibited by neomycin. In terms of biological role, hydrolyzes glycerol-phospholipids at the terminal phosphodiesteric bond to generate phosphatidic acids (PA). Plays an important role in various cellular processes, including phytohormone action, vesicular trafficking, secretion, cytoskeletal arrangement, meiosis, tumor promotion, pathogenesis, membrane deterioration and senescence. Can use phosphatidylserine or N-acylphosphatidylethanolamine as substrates. The chain is Phospholipase D beta 2 from Arabidopsis thaliana (Mouse-ear cress).